Consider the following 124-residue polypeptide: Small ribosomal subunit protein uS12 (124 aa).

Asp89 carries the post-translational modification 3-methylthioaspartic acid.

This sequence belongs to the universal ribosomal protein uS12 family. Part of the 30S ribosomal subunit. Contacts proteins S8 and S17. May interact with IF1 in the 30S initiation complex.

Its function is as follows. With S4 and S5 plays an important role in translational accuracy. Interacts with and stabilizes bases of the 16S rRNA that are involved in tRNA selection in the A site and with the mRNA backbone. Located at the interface of the 30S and 50S subunits, it traverses the body of the 30S subunit contacting proteins on the other side and probably holding the rRNA structure together. The combined cluster of proteins S8, S12 and S17 appears to hold together the shoulder and platform of the 30S subunit. This is Small ribosomal subunit protein uS12 from Buchnera aphidicola subsp. Schizaphis graminum (strain Sg).